A 437-amino-acid polypeptide reads, in one-letter code: Protein disulfide-isomerase tmx3a (437 aa).

Positions 1–21 (MANMRNIILTALLSAIALVSG) are cleaved as a signal peptide. The region spanning 22-126 (YVEGLDDKFT…IIEFTNRVSG (105 aa)) is the Thioredoxin domain. Residues 22 to 368 (YVEGLDDKFT…KNTVMSMVET (347 aa)) are Extracellular-facing. Residues cysteine 48 and cysteine 51 each act as nucleophile in the active site. Cysteine 48 and cysteine 51 form a disulfide bridge. Asparagine 308 is a glycosylation site (N-linked (GlcNAc...) asparagine). The chain crosses the membrane as a helical span at residues 369–389 (APVFSCFVLGLPVGVVVLVIY). Topologically, residues 390–437 (ATCTAVPADDEKPEEEATASPALDTHGKKAIESQPESTEKTSEAKKED) are cytoplasmic. The tract at residues 398–437 (DDEKPEEEATASPALDTHGKKAIESQPESTEKTSEAKKED) is disordered. The segment covering 414–437 (THGKKAIESQPESTEKTSEAKKED) has biased composition (basic and acidic residues). Residues 434–437 (KKED) carry the Di-lysine motif motif.

The protein localises to the endoplasmic reticulum membrane. The catalysed reaction is Catalyzes the rearrangement of -S-S- bonds in proteins.. Functionally, probable disulfide isomerase, which participates in the folding of proteins containing disulfide bonds. May act as a dithiol oxidase. Acts as a regulator of endoplasmic reticulum-mitochondria contact sites via its ability to regulate redox signals. The chain is Protein disulfide-isomerase tmx3a (tmx3a) from Danio rerio (Zebrafish).